The sequence spans 929 residues: Diacylglycerol kinase zeta (929 aa).

Residues 1–14 (MEPRDPSPEARSSD) are compositionally biased toward basic and acidic residues. Disordered regions lie at residues 1-46 (MEPR…RRFP) and 59-80 (KSGL…GESE). A compositionally biased stretch (low complexity) spans 15 to 24 (SESASASSSG). Basic and acidic residues predominate over residues 25–37 (SERDADPEPDKAP). Phorbol-ester/DAG-type zinc fingers lie at residues 98 to 153 (HIWF…NFRC) and 173 to 231 (HHWV…EEPC). The disordered stretch occupies residues 257 to 281 (KASKKKKRASFKRRSSKKGPEEGRW). Residues 258-273 (ASKKKKRASFKRRSSK) show a composition bias toward basic residues. The tract at residues 279–417 (GRWRPFIIRP…HVEEGNVVQL (139 aa)) is mediates interaction with RASGRP1. Positions 292-426 (PLMKPLLVFV…LDRWDLRAEP (135 aa)) constitute a DAGKc domain. The Nuclear export signal motif lies at 362–370 (LSTLDQLRL). Residues 421-441 (DLRAEPNPEAGPEERDDGATD) are disordered. Serine 706 carries the post-translational modification Phosphoserine. The tract at residues 760-783 (ARPDLPTPTSPLPASPCSPTPGSL) is disordered. Residues 764–778 (LPTPTSPLPASPCSP) are compositionally biased toward pro residues. Serine 782 carries the phosphoserine modification. ANK repeat units lie at residues 823–853 (QSRT…EILD) and 858–887 (NGET…SLMK). Residues 925–929 (QETAV) carry the PDZ-binding motif.

This sequence belongs to the eukaryotic diacylglycerol kinase family. As to quaternary structure, interacts (via PDZ-binding motif) with the PDZ domain of the syntrophin SNTG1 and that of SNX27. Interacts with IRS1 in the absence of insulin; insulin stimulation decreases this interaction. Found in a ternary complex with IRS1 and PIP5K1A in the absence of insulin. Interacts with PIP5K1A. Forms a signaling complex with RASGRP1 and HRAS.

It localises to the nucleus. Its subcellular location is the cytoplasm. It is found in the cytosol. The protein resides in the cell membrane. The protein localises to the cell projection. It localises to the lamellipodium. It carries out the reaction a 1,2-diacyl-sn-glycerol + ATP = a 1,2-diacyl-sn-glycero-3-phosphate + ADP + H(+). The enzyme catalyses a 1-O-alkyl-sn-glycerol + ATP = a 1-O-alkyl-sn-glycero-3-phosphate + ADP + H(+). The catalysed reaction is 1-O-alkyl-2-acyl-sn-glycerol + ATP = 1-O-alkyl-2-acyl-sn-glycero-3-phosphate + ADP + H(+). It catalyses the reaction 1,2-didecanoyl-sn-glycerol + ATP = 1,2-didecanoyl-sn-glycero-3-phosphate + ADP + H(+). It carries out the reaction 1,2-ditetradecanoyl-sn-glycerol + ATP = 1,2-ditetradecanoyl-sn-glycero-3-phosphate + ADP + H(+). The enzyme catalyses 1-hexadecanoyl-2-(9Z-octadecenoyl)-sn-glycerol + ATP = 1-hexadecanoyl-2-(9Z-octadecenoyl)-sn-glycero-3-phosphate + ADP + H(+). The catalysed reaction is 1-hexadecanoyl-2-(5Z,8Z,11Z,14Z-eicosatetraenoyl)-sn-glycerol + ATP = 1-hexadecanoyl-2-(5Z,8Z,11Z,14Z-eicosatetraenoyl)-sn-glycero-3-phosphate + ADP + H(+). It catalyses the reaction 1-octadecanoyl-2-(9Z-octadecenoyl)-sn-glycerol + ATP = 1-octadecanoyl-2-(9Z-octadecenoyl)-sn-glycero-3-phosphate + ADP + H(+). It carries out the reaction 1-octadecanoyl-2-(5Z,8Z,11Z,14Z-eicosatetraenoyl)-sn-glycerol + ATP = 1-octadecanoyl-2-(5Z,8Z,11Z,14Z-eicosatetraenoyl)-sn-glycero-3-phosphate + ADP + H(+). The enzyme catalyses 1-octadecanoyl-2-(4Z,7Z,10Z,13Z,16Z,19Z-docosahexaenoyl)-sn-glycerol + ATP = 1-octadecanoyl-2-(4Z,7Z,10Z,13Z,16Z,19Z-docosahexaenoyl)-sn-glycero-3-phosphate + ADP + H(+). The catalysed reaction is 1,2-di-(9Z-octadecenoyl)-sn-glycerol + ATP = 1,2-di-(9Z-octadecenoyl)-sn-glycero-3-phosphate + ADP + H(+). It catalyses the reaction 1-(9Z-octadecenoyl)-2-hexadecanoyl-sn-glycerol + ATP = 1-(9Z)-octadecenoyl-2-hexadecanoyl-sn-glycero-3-phosphate + ADP + H(+). It carries out the reaction 1-eicosanoyl-2-(5Z,8Z,11Z,14Z)-eicosatetraenoyl-sn-glycerol + ATP = 1-eicosanoyl-2-(5Z,8Z,11Z,14Z)-eicosatetraenoyl-sn-glycero-3-phosphate + ADP + H(+). The enzyme catalyses 1,2-di-(5Z,8Z,11Z,14Z)-eicosatetraenoyl-sn-glycerol + ATP = 1,2-di-(5Z,8Z,11Z,14Z)-eicosatetraenoyl-sn-glycero-3-phosphate + ADP + H(+). The catalysed reaction is 1-O-hexadecyl-2-acetyl-sn-glycerol + ATP = 1-O-hexadecyl-2-acetyl-sn-glycero-3-phosphate + ADP + H(+). It catalyses the reaction 1-O-hexadecyl-2-(5Z,8Z,11Z,14Z-eicosatetraenoyl)-sn-glycerol + ATP = 1-O-hexadecyl-2-(5Z,8Z,11Z,14Z-eicosatetraenoyl)-sn-glycero-3-phosphate + ADP + H(+). It carries out the reaction 1-O-hexadecyl-2-(9Z-octadecenoyl)-sn-glycerol + ATP = 1-O-hexadecyl-2-(9Z-octadecenoyl)-sn-glycero-3-phosphate + ADP + H(+). The enzyme catalyses 1-O-hexadecyl-sn-glycerol + ATP = 1-O-hexadecyl-sn-glycero-3-phosphate + ADP + H(+). Its pathway is lipid metabolism; glycerolipid metabolism. Functionally, diacylglycerol kinase that converts diacylglycerol/DAG into phosphatidic acid/phosphatidate/PA and regulates the respective levels of these two bioactive lipids. Thereby, acts as a central switch between the signaling pathways activated by these second messengers with different cellular targets and opposite effects in numerous biological processes. Also plays an important role in the biosynthesis of complex lipids. Does not exhibit an acyl chain-dependent substrate specificity among diacylglycerol species. Can also phosphorylate 1-alkyl-2-acylglycerol in vitro but less efficiently and with a preference for alkylacylglycerols containing an arachidonoyl group. The biological processes it is involved in include T cell activation since it negatively regulates T-cell receptor signaling which is in part mediated by diacylglycerol. By generating phosphatidic acid, stimulates PIP5KIA activity which regulates actin polymerization. Through the same mechanism could also positively regulate insulin-induced translocation of SLC2A4 to the cell membrane. Regulates RASGRP1 activity. The polypeptide is Diacylglycerol kinase zeta (Rattus norvegicus (Rat)).